A 179-amino-acid polypeptide reads, in one-letter code: Inosine/xanthosine triphosphatase (179 aa).

8–13 contacts substrate; the sequence is TTNPAK. Positions 38 and 68 each coordinate Mg(2+). Residue 68–69 participates in substrate binding; sequence EA.

It belongs to the YjjX NTPase family. In terms of assembly, homodimer. Mg(2+) is required as a cofactor. The cofactor is Mn(2+).

It carries out the reaction XTP + H2O = XDP + phosphate + H(+). The enzyme catalyses ITP + H2O = IDP + phosphate + H(+). Functionally, phosphatase that hydrolyzes non-canonical purine nucleotides such as XTP and ITP to their respective diphosphate derivatives. Probably excludes non-canonical purines from DNA/RNA precursor pool, thus preventing their incorporation into DNA/RNA and avoiding chromosomal lesions. This Pectobacterium carotovorum subsp. carotovorum (strain PC1) protein is Inosine/xanthosine triphosphatase.